We begin with the raw amino-acid sequence, 84 residues long: Toxin To5 (84 aa).

An N-terminal signal peptide occupies residues 1-19; that stretch reads MKAIIFFIGCLMLIDLVAG. The 62-residue stretch at 21–82 folds into the LCN-type CS-alpha/beta domain; the sequence is RSGYPVTQKG…IWGSYPNNCG (62 aa). 4 disulfide bridges follow: cysteine 31–cysteine 81, cysteine 35–cysteine 57, cysteine 43–cysteine 62, and cysteine 47–cysteine 64. The residue at position 81 (cysteine 81) is a Cysteine amide.

In terms of tissue distribution, expressed by the venom gland.

It is found in the secreted. Beta toxins bind voltage-independently at site-4 of sodium channels (Nav) and shift the voltage of activation toward more negative potentials thereby affecting sodium channel activation and promoting spontaneous and repetitive firing. The chain is Toxin To5 from Tityus obscurus (Amazonian scorpion).